The following is a 396-amino-acid chain: Phosphoglycerate kinase (396 aa).

Residues Asp-21–Asn-23, Arg-36, His-59–Arg-62, Arg-118, and Arg-151 contribute to the substrate site. ATP-binding positions include Lys-201, Gly-292, Glu-323, and Gly-349 to Ser-352.

Belongs to the phosphoglycerate kinase family. As to quaternary structure, monomer.

It localises to the cytoplasm. It catalyses the reaction (2R)-3-phosphoglycerate + ATP = (2R)-3-phospho-glyceroyl phosphate + ADP. It participates in carbohydrate degradation; glycolysis; pyruvate from D-glyceraldehyde 3-phosphate: step 2/5. This Leptospira borgpetersenii serovar Hardjo-bovis (strain L550) protein is Phosphoglycerate kinase.